The sequence spans 255 residues: GTP cyclohydrolase III 1 (255 aa).

The protein belongs to the archaeal-type GTP cyclohydrolase family.

The catalysed reaction is GTP + 3 H2O = 2-amino-5-formylamino-6-(5-phospho-D-ribosylamino)pyrimidin-4(3H)-one + 2 phosphate + 2 H(+). Functionally, catalyzes the formation of 2-amino-5-formylamino-6-ribofuranosylamino-4(3H)-pyrimidinone ribonucleotide monophosphate and inorganic phosphate from GTP. Also has an independent pyrophosphate phosphohydrolase activity. The chain is GTP cyclohydrolase III 1 (gch31) from Halobacterium salinarum (strain ATCC 700922 / JCM 11081 / NRC-1) (Halobacterium halobium).